The sequence spans 415 residues: Probable G-protein coupled receptor 19 (415 aa).

Over 1 to 69 (MVFAHRMDND…LNPGEVATAS (69 aa)) the chain is Extracellular. N-linked (GlcNAc...) asparagine glycosylation is found at asparagine 25 and asparagine 52. The chain crosses the membrane as a helical span at residues 70–90 (IFFGALWLFSIFGNSLVCLVI). Residues 91 to 102 (HRSRRTQSTTNY) are Cytoplasmic-facing. The helical transmembrane segment at 103 to 123 (FVVSMACADLLISVASTPFVV) threads the bilayer. Residues 124-152 (LQFTTGRWTLGSAMCKVVRYFQYLTPGVQ) are Extracellular-facing. Cysteine 138 and cysteine 210 are oxidised to a cystine. A helical transmembrane segment spans residues 153–173 (IYVLLSICIDRFYTIVYPLSF). The Cytoplasmic segment spans residues 174-182 (KVSREKAKK). A helical transmembrane segment spans residues 183 to 203 (MIAASWILDAAFVTPVFFFYG). The Extracellular segment spans residues 204–221 (SNWDSHCNYFLPPSWEGT). Residues 222 to 242 (AYTVIHFLVGFVIPSILIILF) form a helical membrane-spanning segment. Over 243–277 (YQKVIKYIWRIGTDGRTLRRTMNIVPRTKVKTVKM) the chain is Cytoplasmic. The helical transmembrane segment at 278-298 (FLLLNLVFLFSWLPFHVAQLW) threads the bilayer. Topologically, residues 299-309 (HPHEQDYKKSS) are extracellular. A helical membrane pass occupies residues 310 to 332 (LVFTAVTWVSFSSSASKPTLYSI). Residues 333–415 (YNANFRRGMK…INSNPPNTFV (83 aa)) are Cytoplasmic-facing.

Belongs to the G-protein coupled receptor 1 family. Strongly expressed in the brain.

It localises to the cell membrane. Functionally, G-protein coupled receptor that plays a role in the regulation of circadian rhythms and energy metabolism. Participates in maintaining proper circadian gene expression in the suprachiasmatic nucleus (SCN), the locus of the master circadian clock in the brain. May function as a coordinator of aging-associated metabolic dysfunction, stress response, DNA integrity management, and eventual senescence. Upon binding to adropin, modulates mitochondrial energy metabolism via the p44/42-PDK4 signaling pathway, influencing pyruvate dehydrogenase activity. This chain is Probable G-protein coupled receptor 19 (Gpr19), found in Mus musculus (Mouse).